The primary structure comprises 136 residues: MARTKQTARKSTGGKAPRKQLATKAARKSAPATGGVKKPHRFRPGTVALREIRKYQKSTELLIRKLPFQRLVREIAQDFKTDLRFQSSAVAALQEAAEAYLVGLFEDTNLCAIHAKRVTIMPKDIQLARRIRGERA.

Residues 1 to 43 (MARTKQTARKSTGGKAPRKQLATKAARKSAPATGGVKKPHRFR) form a disordered region. N6,N6,N6-trimethyllysine; alternate is present on residues Lys-5 and Lys-10. Lys-5 and Lys-10 each carry N6,N6-dimethyllysine; alternate. 2 positions are modified to N6-methyllysine; alternate: Lys-5 and Lys-10. Lys-10 bears the N6-acetyllysine; alternate mark. Ser-11 is modified (phosphoserine). Thr-12 is subject to Phosphothreonine. Lys-15 bears the N6-acetyllysine mark. An N6-methyllysine; alternate mark is found at Lys-19, Lys-24, and Lys-28. N6-acetyllysine; alternate occurs at positions 19 and 24. At Lys-28 the chain carries N6,N6,N6-trimethyllysine; alternate. Lys-28 bears the N6,N6-dimethyllysine; alternate mark. Ser-29 carries the phosphoserine modification. Lys-37 is subject to N6,N6,N6-trimethyllysine; alternate. Lys-37 carries the post-translational modification N6,N6-dimethyllysine; alternate. An N6-methyllysine; alternate modification is found at Lys-37.

Belongs to the histone H3 family. As to quaternary structure, the nucleosome is a histone octamer containing two molecules each of H2A, H2B, H3 and H4 assembled in one H3-H4 heterotetramer and two H2A-H2B heterodimers. The octamer wraps approximately 147 bp of DNA. In terms of processing, acetylation is generally linked to gene activation. Can be acetylated to form H3K9ac, H3K14ac, H3K18ac and H3K23ac. H3K9ac could compete with H3K9me and prevent gene silencing. H3K9ac is restricted to euchromatin. Methylated to form mainly H3K4me, H3K9me, H3K18me, H3K23me, H3K27me and H3K36me. H3K4me1/2/3, H3K9me3, H3K27me3 and H3K36me1/2/3 are typical marks for euchromatin, whereas heterochromatic chromocenters are enriched in H3K9me1/2 and H3K27me1/2. H2BK143ub1 is probably prerequisite for H3K4me. Post-translationally, can be phosphorylated to form H3S10ph, H3T11ph and H3S28ph.

It is found in the nucleus. It localises to the chromosome. Functionally, core component of nucleosome. Nucleosomes wrap and compact DNA into chromatin, limiting DNA accessibility to the cellular machineries which require DNA as a template. Histones thereby play a central role in transcription regulation, DNA repair, DNA replication and chromosomal stability. DNA accessibility is regulated via a complex set of post-translational modifications of histones, also called histone code, and nucleosome remodeling. This chain is Histone H3.2, found in Brassica napus (Rape).